A 508-amino-acid polypeptide reads, in one-letter code: Aldehyde dehydrogenase family 7 member B4 (508 aa).

244 to 249 (GSSRVG) lines the NAD(+) pocket. The active-site Proton acceptor is E266. Catalysis depends on C300, which acts as the Nucleophile.

It belongs to the aldehyde dehydrogenase family. As to quaternary structure, homotetramer.

The enzyme catalyses an aldehyde + NAD(+) + H2O = a carboxylate + NADH + 2 H(+). The chain is Aldehyde dehydrogenase family 7 member B4 (ALDH7B4) from Arabidopsis thaliana (Mouse-ear cress).